A 1721-amino-acid polypeptide reads, in one-letter code: MKEEEIANLGPQEYFNYLEGINKKIIIELKTVANIDTAKDTDNLQNILIESSLALEHNIRNLLYFVDKCPISYDQIVHYHSHFKEVVKIFFQVCQDLIKAAQALILNSCDYLTTSNFAKCRGEAIKTIKNTMATCSNFEKLYYNPDLQLEDEVDLVHQQQQKEQEQQQKEQEQYEQEQLILKQLKEQELKKQQEQQQQQQQQQQQQQQQQQQQQQKHQEEKEKNDQKEKEEKLKKQLLAEQQKQKQEELERQQQQLQQQQQLLQQQQQLLQQQQQQQRSDPIIIPPITLKTSQSDLLSGGLSPKVNSPGSPNLGKFTESAERVANFDRGTANIILNMNKIKEISLSGDSEQAPEIVTAARIISENIAIISKELRYKTLGTNLSEHFVSVVQVARLAIKNKSDQFYQDQLELAIEKFNDTMRKIIYSVKSISKSSMNLRQFGVDESSLGRSPVVSPEKSISPSFTSSTSERILSHEIKNHNNNNNNYNNSSTNNLQTSFSTPSLSSNHSQQPNQQPLQSPLLINQLQSTSSSSSSSSSNLSNSLNSIQLPQATTTTTTATSPSTSTSTSTSTSPNSSSLSISDQDKQLKRKEKQHQIVIPKDVKDSVANQQQQQQQQQNGTTSPRNNESSVTAATTTTTSTTASITTNVNTIPNFPPNKQLPATPTTGTPSTSTPTPQTPTSTSQNDKQNENNNKENFVDKQKTLGKLFSKFVHKKRTPLPGFDSSNSSSPSNNSNTTNSSSHSSTNSSPMETSPGVESPKITKSPSQNNILVDSLDIGSDNQQQQQDKLTTTTSTTTITINNNNNNNNNNNNNNNNNNNNIQQQQQQQQQIPTTPNKLSNSIAMNSSNRLMTPKKERSFTIGLVSGKHSCVVVETPKSKKLFQHESAKQILSIISMNFPSFEKEFQMQNSEVISNIIEQIGNVIKNYHDEVSESSSSSSSSTTSPNNINTPSDCSPILNSENSKDSHNLSSINNSSYDPVSPALRKMYENGSYDSKEHSRSSIQSKITRKLGTIRKKGPSPFNMLLNSSTGSLSSLYLDQLNGGNGDSSSSSSSSYNLVGGSGISGYDNQNEIDASEHLVSTSSLFTEEAIELVSKCFEASIIVNHSGGTSSEIKALFSSTLDHLESMLQSSVNFGKIDPSSFCMTFLKNIRQHIPTMKSKGGKCDPTLVTAATKLFRHTILSNLDKSIHSLCHSVRVLAIQMTIIVISISAKPWDISSQLQLFASAKSFIDSLVSLLDAVENKIYISTNTNIQDDVEVPTIDDTEDTNIWEEADSPLTFGWISDEGSKTGRYVPKAGTLNKLISALTQDNKHDISRYTKTFLLTYQSFTNPWKLMEKLIQRYNVPLDEKPDVRATTQLRVVSFMQTWIERNFNDFDDQLIGQLKEFRTRLLMDNNNDLAVILGGLIKKKEAERSLSKERSTNHLTFPELMIPDGQKSPTALFLLLNESEIARQLTLIDFNIFSKIQPTELLDQSWNKDSLKFKSPNVIEMINRANKFSFWVSSQILWQEDIEERVKVFEKFILISKYLREMNNFNTLLAIFTGLNTAPILRLKKTFALLSPNSLSIYNSLEKLMNSSGSYKNYRSVSKNPPLLPYLPVILSDLTFMEDGNPDKINNLINFQKRELICRVISEVQQCQQQTKYEFPVVEPIHTLLTELPSSTPSELYQLSLIREPRETNQSNANSSISSGSNFLSNSSNHNIGNNNGFDTLKKYYKSSNNN.

The stretch at 148–279 (QLEDEVDLVH…LQQQQQQQRS (132 aa)) forms a coiled coil. 6 disordered regions span residues 213–232 (QQQK…KEEK), 445–515 (SSLG…NQQP), 551–701 (ATTT…VDKQ), 716–766 (RTPL…KSPS), 797–837 (TITI…TPNK), and 929–981 (DEVS…DPVS). Positions 216-232 (KHQEEKEKNDQKEKEEK) are enriched in basic and acidic residues. 4 stretches are compositionally biased toward low complexity: residues 454–469 (SPEK…STSE), 479–493 (HNNN…STNN), 501–515 (PSLS…NQQP), and 551–581 (ATTT…LSIS). The segment covering 618-627 (NGTTSPRNNE) has biased composition (polar residues). Low complexity-rich tracts occupy residues 628–651 (SSVT…VNTI) and 663–686 (TPTT…SQND). Basic and acidic residues predominate over residues 687–701 (KQNENNNKENFVDKQ). Composition is skewed to low complexity over residues 724-748 (SSNS…TNSS), 797-836 (TITI…TTPN), and 933-952 (ESSS…NTPS). Residues 802 to 831 (NNNNNNNNNNNNNNNNNNNIQQQQQQQQQI) are a coiled coil. Positions 968–978 (NLSSINNSSYD) are enriched in polar residues. Residues 1291–1411 (GRYVPKAGTL…ILGGLIKKKE (121 aa)) enclose the N-terminal Ras-GEF domain. The Ras-GEF domain occupies 1447–1676 (NESEIARQLT…YQLSLIREPR (230 aa)).

Post-translationally, phosphorylated on threonine residues.

Functionally, promotes the exchange of Ras-bound GDP by GTP. May also play a role in the activation of rasG. The polypeptide is Ras guanine nucleotide exchange factor R (gefR) (Dictyostelium discoideum (Social amoeba)).